We begin with the raw amino-acid sequence, 251 residues long: MADPVLQSPKNSHFFQPLLPGFDSYLNIPVKFFSKRIQGRNEGRTVELRTDASEKTWQVKIQGRRLTVGWKEFASAHDFRVGDIIVFRHEGSLVFHVTALGPSCCEIQYVPSCNNQENISNLSMKQSIKTELESSLDEDKVNMGKFPRKKHVKKRIPEAEAKSFSSDKSCFVAHVTDSNLREDTLFLPRKFDRSDGLIKGSNKIVLMNEEARTWTLILKFRNSSRTFYMRGGWTSFSMSMGLNLEIPSRLN.

DNA-binding regions (TF-B3) lie at residues 11–103 (NSHF…LGPS) and 170–251 (CFVA…SRLN).

The protein localises to the nucleus. This chain is B3 domain-containing protein REM7 (REM7), found in Arabidopsis thaliana (Mouse-ear cress).